We begin with the raw amino-acid sequence, 90 residues long: Probable Fe(2+)-trafficking protein (90 aa).

Belongs to the Fe(2+)-trafficking protein family.

In terms of biological role, could be a mediator in iron transactions between iron acquisition and iron-requiring processes, such as synthesis and/or repair of Fe-S clusters in biosynthetic enzymes. The sequence is that of Probable Fe(2+)-trafficking protein from Ectopseudomonas mendocina (strain ymp) (Pseudomonas mendocina).